The primary structure comprises 388 residues: Flavin-dependent monooxygenase (388 aa).

FAD contacts are provided by residues 12 to 15, 34 to 36, 44 to 47, Arg-105, Tyr-267, Asp-289, and 296 to 302; these read VGVA, EKS, QALD, and PLSGQGN.

This sequence belongs to the aromatic-ring hydroxylase family. It depends on FAD as a cofactor.

It carries out the reaction a tetracycline + NADPH + O2 + H(+) = a (1S,10aS)-3-(CONH2)-1-(Me2N)-3,3a,4,6-(HO)4-2,5-dioxo-1H,10aH,11H,11aH-cyclopenta[b]anthracene + CO + NADP(+) + H2O. The catalysed reaction is 7-chlorotetracycline + NADPH + O2 + H(+) = (1S,10S,10aS)-3-(CONH2)-9-Cl-1-(Me2N)-3,3a,4,10-(HO)4-10-Me-2,5-dioxo-1H,10aH,11H,11aH-cyclopenta[b]anthracen-6-olate + CO + NADP(+) + H2O. Inhibited by anhydrotetracycline. Its function is as follows. An FAD-requiring monooxygenase active on tetracycline antibiotic and some of its derivatives, which leads to their inactivation. Expression in E.coli confers high resistance to tetracycline and oxytetracycline, does not confer resistance to minocycline or tigecycline. Degrades tetracycline and oxytetracycline; the reaction requires NADPH. Degrades and confers resistance to chlortetracycline. This is Flavin-dependent monooxygenase (tet(50)) from Unknown prokaryotic organism.